The primary structure comprises 90 residues: RNA-binding protein Hfq (90 aa).

The Sm domain occupies 9 to 68 (DPFLNALRRERVPVSIYLVNGIKLQGQVESFDQFVILLKNTVSQMVYKHAISTVVPARPF).

The protein belongs to the Hfq family. In terms of assembly, homohexamer.

RNA chaperone that binds small regulatory RNA (sRNAs) and mRNAs to facilitate mRNA translational regulation in response to envelope stress, environmental stress and changes in metabolite concentrations. Also binds with high specificity to tRNAs. The polypeptide is RNA-binding protein Hfq (Shewanella oneidensis (strain ATCC 700550 / JCM 31522 / CIP 106686 / LMG 19005 / NCIMB 14063 / MR-1)).